The following is a 450-amino-acid chain: Transcription factor SCREAM2 (450 aa).

3 disordered regions span residues 1 to 47 (MNSD…NQND), 207 to 231 (RQSS…YERE), and 244 to 265 (GLNY…KGMP). Positions 209 to 220 (SSSSKMCNSESS) are enriched in low complexity. The span at 221–230 (SEMRKSSYER) shows a compositional bias: basic and acidic residues. Residues 263-312 (GMPAKNLMAERRRRKKLNDRLYMLRSVVPKISKMDRASILGDAIDYLKEL) enclose the bHLH domain. Positions 378 to 450 (NIHMFCGRRP…LDTAGYAGLV (73 aa)) constitute an ACT domain.

In terms of assembly, homodimer. Heterodimers with SPCH, MUTE, and FAMA. Expressed constitutively in roots, leaves, stems, and flowers. Broad expression within stomatal cell lineages of leaf epidermis, except in mature guard-cells.

The protein resides in the nucleus. Functionally, mediates stomatal differentiation in the epidermis probably by controlling successive roles of SPCH, MUTE, and FAMA. Functions as a dimer with SPCH during stomatal initiation. The protein is Transcription factor SCREAM2 (SCRM2) of Arabidopsis thaliana (Mouse-ear cress).